The primary structure comprises 118 residues: Large ribosomal subunit protein bL19 (118 aa).

This sequence belongs to the bacterial ribosomal protein bL19 family.

In terms of biological role, this protein is located at the 30S-50S ribosomal subunit interface and may play a role in the structure and function of the aminoacyl-tRNA binding site. This Helicobacter hepaticus (strain ATCC 51449 / 3B1) protein is Large ribosomal subunit protein bL19.